The sequence spans 436 residues: tRNA-2-methylthio-N(6)-dimethylallyladenosine synthase (436 aa).

Residues 5–121 (RKLFIKTYGC…LPDMLERTEG (117 aa)) enclose the MTTase N-terminal domain. Positions 14, 50, 84, 158, 162, and 165 each coordinate [4Fe-4S] cluster. Residues 144-373 (ALRGPTAFLT…LGEQQRAAQA (230 aa)) form the Radical SAM core domain. The region spanning 373–435 (AAMVGRELGV…PNSLAGERIG (63 aa)) is the TRAM domain.

This sequence belongs to the methylthiotransferase family. MiaB subfamily. Monomer. Requires [4Fe-4S] cluster as cofactor.

The protein resides in the cytoplasm. The enzyme catalyses N(6)-dimethylallyladenosine(37) in tRNA + (sulfur carrier)-SH + AH2 + 2 S-adenosyl-L-methionine = 2-methylsulfanyl-N(6)-dimethylallyladenosine(37) in tRNA + (sulfur carrier)-H + 5'-deoxyadenosine + L-methionine + A + S-adenosyl-L-homocysteine + 2 H(+). Catalyzes the methylthiolation of N6-(dimethylallyl)adenosine (i(6)A), leading to the formation of 2-methylthio-N6-(dimethylallyl)adenosine (ms(2)i(6)A) at position 37 in tRNAs that read codons beginning with uridine. This chain is tRNA-2-methylthio-N(6)-dimethylallyladenosine synthase, found in Cereibacter sphaeroides (strain ATCC 17025 / ATH 2.4.3) (Rhodobacter sphaeroides).